Reading from the N-terminus, the 415-residue chain is Serine hydroxymethyltransferase (415 aa).

Residues Leu-119 and 123 to 125 (GHL) each bind (6S)-5,6,7,8-tetrahydrofolate. At Lys-228 the chain carries N6-(pyridoxal phosphate)lysine.

Belongs to the SHMT family. As to quaternary structure, homodimer. Pyridoxal 5'-phosphate serves as cofactor.

It localises to the cytoplasm. The catalysed reaction is (6R)-5,10-methylene-5,6,7,8-tetrahydrofolate + glycine + H2O = (6S)-5,6,7,8-tetrahydrofolate + L-serine. The protein operates within one-carbon metabolism; tetrahydrofolate interconversion. Its pathway is amino-acid biosynthesis; glycine biosynthesis; glycine from L-serine: step 1/1. Catalyzes the reversible interconversion of serine and glycine with tetrahydrofolate (THF) serving as the one-carbon carrier. This reaction serves as the major source of one-carbon groups required for the biosynthesis of purines, thymidylate, methionine, and other important biomolecules. Also exhibits THF-independent aldolase activity toward beta-hydroxyamino acids, producing glycine and aldehydes, via a retro-aldol mechanism. The polypeptide is Serine hydroxymethyltransferase (Coprothermobacter proteolyticus (strain ATCC 35245 / DSM 5265 / OCM 4 / BT)).